Consider the following 100-residue polypeptide: UPF0473 protein lwe1514 (100 aa).

Belongs to the UPF0473 family.

The polypeptide is UPF0473 protein lwe1514 (Listeria welshimeri serovar 6b (strain ATCC 35897 / DSM 20650 / CCUG 15529 / CIP 8149 / NCTC 11857 / SLCC 5334 / V8)).